The chain runs to 262 residues: Spindlin-1 (262 aa).

The interval 1–51 (MKTPFGKTPGQRSRADAGHAGVSANMMKKRTSHKKHRSSVGPSKPVSQPRR) is disordered. Residues K7 and K28 each participate in a glycyl lysine isopeptide (Lys-Gly) (interchain with G-Cter in SUMO2) cross-link. Basic residues predominate over residues 27-38 (MKKRTSHKKHRS). K44 bears the N6-acetyllysine; alternate mark. Residue K44 forms a Glycyl lysine isopeptide (Lys-Gly) (interchain with G-Cter in SUMO2); alternate linkage. Residues 53-116 (IVGCRIQHGW…RVSALEVLPD (64 aa)) are tudor-like domain 1. The histone H3K4me3 and H3R8me2a binding stretch occupies residues 93 to 98 (GFDCVY). 2 positions are modified to phosphoserine; by AURKA: S109 and S124. The segment at 132–193 (MIGKAVEHMF…DYKEGDLRIM (62 aa)) is tudor-like domain 2. Residue E142 is a region of interest, histone H3K4me3 and H3R8me2a binding. S199 carries the phosphoserine modification. Residues 213 to 262 (LVGKQVEYAKEDGSKRTGMVIHQVEAKPSVYFIKFDDDFHIYVYDLVKTS) are tudor-like domain 3. Residues 250–252 (DFH) form a histone H3K4me3 and H3R8me2a binding region.

The protein belongs to the SPIN/STSY family. As to quaternary structure, homodimer; may form higher-order oligomers. Interacts with TCF7L2/TCF4; the interaction is direct. Interacts with HABP4 and SERBP1. Interacts with SPINDOC; SPINDOC stabilizes SPIN1 and enhances its association with bivalent H3K4me3K9me3 mark. Interacts with SPOCD1; promoting recruitment of PIWIL4 and SPOCD1 to transposons. Post-translationally, phosphorylated during oocyte meiotic maturation. As to expression, highly expressed in ovarian cancer tissues.

It is found in the nucleus. The protein localises to the nucleolus. Functionally, chromatin reader that specifically recognizes and binds histone H3 both trimethylated at 'Lys-4' and 'Lys-9' (H3K4me3K9me3) and is involved in piRNA-mediated retrotransposon silencing during spermatogenesis. Plays a key role in the initiation of the PIWIL4-piRNA pathway, a pathway that directs transposon DNA methylation and silencing in the male embryonic germ cells, by promoting recruitment of DNA methylation machinery to transposons: binds young, but not old, LINE1 transposons, which are specifically marked with H3K4me3K9me3, and promotes the recruitment of PIWIL4 and SPOCD1 to transposons, leading to piRNA-directed DNA methylation. Also recognizes and binds histone H3 both trimethylated at 'Lys-4' and asymmetrically dimethylated at 'Arg-8' (H3K4me3 and H3R8me2a) and acts as an activator of Wnt signaling pathway downstream of PRMT2. In case of cancer, promotes cell cancer proliferation via activation of the Wnt signaling pathway. Overexpression induces metaphase arrest and chromosomal instability. Localizes to active rDNA loci and promotes the expression of rRNA genes. May play a role in cell-cycle regulation during the transition from gamete to embryo. Involved in oocyte meiotic resumption, a process that takes place before ovulation to resume meiosis of oocytes blocked in prophase I: may act by regulating maternal transcripts to control meiotic resumption. The polypeptide is Spindlin-1 (Homo sapiens (Human)).